The chain runs to 24 residues: Brevinin-1Sa (24 aa).

A disulfide bridge connects residues Cys-18 and Cys-24.

As to expression, expressed by the skin glands.

Its subcellular location is the secreted. Its function is as follows. Antibacterial activity against Gram-negative bacterium E.coli. This Lithobates sphenocephalus (Southern leopard frog) protein is Brevinin-1Sa.